Here is a 139-residue protein sequence, read N- to C-terminus: Ribulose bisphosphate carboxylase small subunit (139 aa).

The protein belongs to the RuBisCO small chain family. As to quaternary structure, heterohexadecamer of 8 large and 8 small subunits.

The protein localises to the plastid. Its subcellular location is the chloroplast. Functionally, ruBisCO catalyzes two reactions: the carboxylation of D-ribulose 1,5-bisphosphate, the primary event in carbon dioxide fixation, as well as the oxidative fragmentation of the pentose substrate in the photorespiration process. Both reactions occur simultaneously and in competition at the same active site. Although the small subunit is not catalytic it is essential for maximal activity. The protein is Ribulose bisphosphate carboxylase small subunit of Cylindrotheca sp. (strain N1) (Marine diatom).